The following is a 258-amino-acid chain: Phosphate import ATP-binding protein PstB (258 aa).

Positions 5–247 constitute an ABC transporter domain; sequence IDVSGLTAYY…SQIFSNPKEK (243 aa). An ATP-binding site is contributed by 37–44; that stretch reads GPSGCGKS.

It belongs to the ABC transporter superfamily. Phosphate importer (TC 3.A.1.7) family. The complex is composed of two ATP-binding proteins (PstB), two transmembrane proteins (PstC and PstA) and a solute-binding protein (PstS).

The protein localises to the cell membrane. The enzyme catalyses phosphate(out) + ATP + H2O = ADP + 2 phosphate(in) + H(+). Its function is as follows. Part of the ABC transporter complex PstSACB involved in phosphate import. Responsible for energy coupling to the transport system. This is Phosphate import ATP-binding protein PstB from Frankia casuarinae (strain DSM 45818 / CECT 9043 / HFP020203 / CcI3).